The primary structure comprises 106 residues: UPF0213 protein KPN78578_35340 (106 aa).

The 76-residue stretch at 13–88 folds into the GIY-YIG domain; sequence VCWFLYLIRT…KQLTKREKER (76 aa).

Belongs to the UPF0213 family.

In Klebsiella pneumoniae subsp. pneumoniae (strain ATCC 700721 / MGH 78578), this protein is UPF0213 protein KPN78578_35340.